The chain runs to 401 residues: N-acetyllactosaminide beta-1,6-N-acetylglucosaminyl-transferase (401 aa).

The Cytoplasmic portion of the chain corresponds to 1 to 7 (MPPSVRY). Residues 8-28 (FFIVSVTTVIVFIVLYVLSFG) traverse the membrane as a helical; Signal-anchor for type II membrane protein segment. Over 29-401 (GDQSYQKLNI…EIAIQPSWYF (373 aa)) the chain is Lumenal. Asn-37, Asn-255, Asn-315, and Asn-389 each carry an N-linked (GlcNAc...) asparagine glycan.

It belongs to the glycosyltransferase 14 family.

It localises to the golgi apparatus membrane. It carries out the reaction a beta-D-Gal-(1-&gt;4)-beta-D-GlcNAc-(1-&gt;3)-beta-D-Gal-(1-&gt;4)-beta-D-GlcNAc derivative + UDP-N-acetyl-alpha-D-glucosamine = a beta-D-Gal-(1-&gt;4)-beta-D-GlcNAc-(1-&gt;3)-[beta-D-GlcNAc-(1-&gt;6)]-beta-D-Gal-(1-&gt;4)-N-acetyl-beta-D-glucosaminyl derivative + UDP + H(+). It participates in protein modification; protein glycosylation. Branching enzyme that converts linear into branched poly-N-acetyllactosaminoglycans. Introduces the blood group I antigen during embryonic development. It is closely associated with the development and maturation of erythroid cells. This is N-acetyllactosaminide beta-1,6-N-acetylglucosaminyl-transferase (Gcnt2) from Mus musculus (Mouse).